The following is a 681-amino-acid chain: Proton channel OTOP3 (681 aa).

Positions 1–25 (MLSKEEPACRQFHSREKTWGNEHNG) are enriched in basic and acidic residues. A disordered region spans residues 1 to 26 (MLSKEEPACRQFHSREKTWGNEHNGK). The Cytoplasmic segment spans residues 1 to 112 (MLSKEEPACR…LHQRAKKTGR (112 aa)). Residues 113-133 (LFSGLFGLNLMFLGGTVVSSV) traverse the membrane as a helical segment. Over 134-143 (ALSNKAVPER) the chain is Extracellular. Residues 144–166 (DSQSFLCILMLLSSVWALYHLLF) traverse the membrane as a helical segment. Topologically, residues 167 to 182 (IRNQNGAVHHDHHAGA) are cytoplasmic. The chain crosses the membrane as a helical span at residues 183–204 (MWLKASLAIFGVCSIILSIFEI). The Extracellular portion of the chain corresponds to 205-216 (GHALLLQNCEIL). Residues 217 to 240 (MDIVFFSIEIVFVSVQTVLLWVSC) traverse the membrane as a helical segment. Topologically, residues 241-248 (KDCVQMHH) are cytoplasmic. Residues 249-271 (SVTRYGIMLTLATDILLWLTAVI) form a helical membrane-spanning segment. Residues 272 to 317 (DDSLEQDLEILQSNSTQDESNEMAQCQCPTDSMCWGLKQGYVTMFP) lie on the Extracellular side of the membrane. The helical transmembrane segment at 318–334 (FNIEYSLICATLLFIMW) threads the bilayer. Residues 335 to 358 (KNVGRREKLHSDPPRHTFQLRGII) lie on the Cytoplasmic side of the membrane. Residues 359-378 (YGPLIGGAALLVGISVFVQY) traverse the membrane as a helical segment. Over 379 to 392 (QVEATSGMVSILSY) the chain is Extracellular. A helical transmembrane segment spans residues 393–415 (HMYYGYKMIILAPMIVCSVAGII). The Cytoplasmic portion of the chain corresponds to 416–507 (AHSLREKEKK…QGKMKNYTRK (92 aa)). A helical membrane pass occupies residues 508 to 529 (LDVTLLFVSAVGQLGISYFSII). Topologically, residues 530-540 (ATVVTTPWTML) are extracellular. The helical transmembrane segment at 541–563 (SALNFSNSLLLILQYLSQTMFII) threads the bilayer. At 564-614 (ESMRSIHEEEKEKPGHHEESHRRMSVQEMHKAPPSCLDAGHLGLSRRVVKE) the chain is on the cytoplasmic side. The chain crosses the membrane as a helical span at residues 615-632 (MAMFLMICNIMCWILGAF). The Extracellular portion of the chain corresponds to 633 to 651 (GAHPLYMNGLERQLYGSGI). The chain crosses the membrane as a helical span at residues 652–674 (WLAILNIGLPLSVFYRMHSVGIL). At 675–681 (LEVYLHA) the chain is on the cytoplasmic side.

This sequence belongs to the otopetrin family. Homodimer.

It localises to the cell membrane. It catalyses the reaction H(+)(in) = H(+)(out). PH regulates the proton channel activity from both sides of the plasma membrane. Low pH activates the channel from the extracellular side but inactivates the channel on the intracellular side. Zn(2+) and Ca(2+) can partially block the channel. Its function is as follows. Proton-selective channel gated by extracellular protons. The protein is Proton channel OTOP3 (otop3) of Xenopus tropicalis (Western clawed frog).